Reading from the N-terminus, the 209-residue chain is Guanylate kinase (209 aa).

Residues glycine 9 to isoleucine 188 enclose the Guanylate kinase-like domain. Serine 16–threonine 23 serves as a coordination point for ATP.

The protein belongs to the guanylate kinase family.

Its subcellular location is the cytoplasm. The catalysed reaction is GMP + ATP = GDP + ADP. Essential for recycling GMP and indirectly, cGMP. The polypeptide is Guanylate kinase (Ehrlichia ruminantium (strain Gardel)).